The chain runs to 238 residues: Urease accessory protein UreG (238 aa).

Over residues methionine 1–histidine 15 the composition is skewed to basic and acidic residues. The segment at methionine 1–proline 27 is disordered. Glycine 34–threonine 41 provides a ligand contact to GTP.

This sequence belongs to the SIMIBI class G3E GTPase family. UreG subfamily. As to quaternary structure, homodimer. UreD, UreF and UreG form a complex that acts as a GTP-hydrolysis-dependent molecular chaperone, activating the urease apoprotein by helping to assemble the nickel containing metallocenter of UreC. The UreE protein probably delivers the nickel.

The protein localises to the cytoplasm. Its function is as follows. Facilitates the functional incorporation of the urease nickel metallocenter. This process requires GTP hydrolysis, probably effectuated by UreG. In Nocardia farcinica (strain IFM 10152), this protein is Urease accessory protein UreG.